The sequence spans 254 residues: 5'-nucleotidase SurE (254 aa).

A divalent metal cation is bound by residues D8, D9, S38, and N91.

It belongs to the SurE nucleotidase family. The cofactor is a divalent metal cation.

The protein resides in the cytoplasm. The catalysed reaction is a ribonucleoside 5'-phosphate + H2O = a ribonucleoside + phosphate. Functionally, nucleotidase that shows phosphatase activity on nucleoside 5'-monophosphates. The polypeptide is 5'-nucleotidase SurE (Anaeromyxobacter dehalogenans (strain 2CP-1 / ATCC BAA-258)).